A 186-amino-acid chain; its full sequence is Peptidyl-tRNA hydrolase (186 aa).

TRNA is bound at residue Tyr14. The active-site Proton acceptor is the His19. Positions 64, 66, and 112 each coordinate tRNA.

The protein belongs to the PTH family. Monomer.

Its subcellular location is the cytoplasm. It catalyses the reaction an N-acyl-L-alpha-aminoacyl-tRNA + H2O = an N-acyl-L-amino acid + a tRNA + H(+). Its function is as follows. Hydrolyzes ribosome-free peptidyl-tRNAs (with 1 or more amino acids incorporated), which drop off the ribosome during protein synthesis, or as a result of ribosome stalling. Functionally, catalyzes the release of premature peptidyl moieties from peptidyl-tRNA molecules trapped in stalled 50S ribosomal subunits, and thus maintains levels of free tRNAs and 50S ribosomes. The chain is Peptidyl-tRNA hydrolase from Geobacillus thermodenitrificans (strain NG80-2).